A 617-amino-acid polypeptide reads, in one-letter code: 1-deoxy-D-xylulose-5-phosphate synthase (617 aa).

Residues H76 and 117–119 contribute to the thiamine diphosphate site; that span reads GHS. Mg(2+) is bound at residue D148. Residues 149–150, N177, Y285, and E366 contribute to the thiamine diphosphate site; that span reads GA. N177 serves as a coordination point for Mg(2+).

It belongs to the transketolase family. DXPS subfamily. Homodimer. It depends on Mg(2+) as a cofactor. Requires thiamine diphosphate as cofactor.

It catalyses the reaction D-glyceraldehyde 3-phosphate + pyruvate + H(+) = 1-deoxy-D-xylulose 5-phosphate + CO2. Its pathway is metabolic intermediate biosynthesis; 1-deoxy-D-xylulose 5-phosphate biosynthesis; 1-deoxy-D-xylulose 5-phosphate from D-glyceraldehyde 3-phosphate and pyruvate: step 1/1. Catalyzes the acyloin condensation reaction between C atoms 2 and 3 of pyruvate and glyceraldehyde 3-phosphate to yield 1-deoxy-D-xylulose-5-phosphate (DXP). This Histophilus somni (strain 129Pt) (Haemophilus somnus) protein is 1-deoxy-D-xylulose-5-phosphate synthase.